The chain runs to 193 residues: Probable chorismate pyruvate-lyase (193 aa).

The substrate site is built by Arg-81, Leu-119, and Glu-177.

Belongs to the UbiC family.

It is found in the cytoplasm. The enzyme catalyses chorismate = 4-hydroxybenzoate + pyruvate. The protein operates within cofactor biosynthesis; ubiquinone biosynthesis. Functionally, removes the pyruvyl group from chorismate, with concomitant aromatization of the ring, to provide 4-hydroxybenzoate (4HB) for the ubiquinone pathway. The polypeptide is Probable chorismate pyruvate-lyase (Idiomarina loihiensis (strain ATCC BAA-735 / DSM 15497 / L2-TR)).